We begin with the raw amino-acid sequence, 377 residues long: UDP-N-acetylglucosamine--N-acetylmuramyl-(pentapeptide) pyrophosphoryl-undecaprenol N-acetylglucosamine transferase (377 aa).

UDP-N-acetyl-alpha-D-glucosamine-binding positions include 11-13 (TGG), N123, R164, S194, and Q295.

The protein belongs to the glycosyltransferase 28 family. MurG subfamily.

The protein resides in the cell inner membrane. It catalyses the reaction di-trans,octa-cis-undecaprenyl diphospho-N-acetyl-alpha-D-muramoyl-L-alanyl-D-glutamyl-meso-2,6-diaminopimeloyl-D-alanyl-D-alanine + UDP-N-acetyl-alpha-D-glucosamine = di-trans,octa-cis-undecaprenyl diphospho-[N-acetyl-alpha-D-glucosaminyl-(1-&gt;4)]-N-acetyl-alpha-D-muramoyl-L-alanyl-D-glutamyl-meso-2,6-diaminopimeloyl-D-alanyl-D-alanine + UDP + H(+). Its pathway is cell wall biogenesis; peptidoglycan biosynthesis. Its function is as follows. Cell wall formation. Catalyzes the transfer of a GlcNAc subunit on undecaprenyl-pyrophosphoryl-MurNAc-pentapeptide (lipid intermediate I) to form undecaprenyl-pyrophosphoryl-MurNAc-(pentapeptide)GlcNAc (lipid intermediate II). This is UDP-N-acetylglucosamine--N-acetylmuramyl-(pentapeptide) pyrophosphoryl-undecaprenol N-acetylglucosamine transferase from Opitutus terrae (strain DSM 11246 / JCM 15787 / PB90-1).